The chain runs to 336 residues: MAFNLRNRNFLKMLDFTPREIRYLLDLSRDLKRAKYSGTEQQHLKGKNVALIFEKTSTRTRCAFEVACFDQGANVSYIGPSGSQIGHKESMKDTARVLGRMYDAIEYRGYSQDMVEHELAAYAGVPVYNGLTDEYHPTQMLADVLTMWEHSDKPISQISYTYLGDARNNMGNSLLVIGSKLGMDVRIGAPKHLWPTDELVAECREIAKRTGARITLTEDPKEAVKGTDFIHTDVWVSMGEPAEVWAERIRLLKPYQVNSALMAASGNPQVKFMHCLPAFHNSETKVGKEISAQYPELANGIEVTEDVFESEACIAFEQAENRMHTIKAILVSTLGD.

Residues 57 to 60, glutamine 84, arginine 108, and 136 to 139 each bind carbamoyl phosphate; these read STRT and HPTQ. Residues asparagine 169, aspartate 233, and 237-238 each bind L-ornithine; that span reads SM. Carbamoyl phosphate contacts are provided by residues 275-276 and arginine 322; that span reads CL.

The protein belongs to the aspartate/ornithine carbamoyltransferase superfamily. OTCase family.

The protein localises to the cytoplasm. It catalyses the reaction carbamoyl phosphate + L-ornithine = L-citrulline + phosphate + H(+). Its pathway is amino-acid degradation; L-arginine degradation via ADI pathway; carbamoyl phosphate from L-arginine: step 2/2. In terms of biological role, reversibly catalyzes the transfer of the carbamoyl group from carbamoyl phosphate (CP) to the N(epsilon) atom of ornithine (ORN) to produce L-citrulline. The protein is Ornithine carbamoyltransferase, catabolic of Chromobacterium violaceum (strain ATCC 12472 / DSM 30191 / JCM 1249 / CCUG 213 / NBRC 12614 / NCIMB 9131 / NCTC 9757 / MK).